A 338-amino-acid polypeptide reads, in one-letter code: MRYKKTLMLSIMITSFNSFAFNDNYSSTSTVYATSNEATDSRGSEHLRYPYLECIKIGMSRDYLENCVKVSFPTSQDMFYDAYPSTESDGAKTRTKEDFSARLLAGDYDSLQKLYIDFYLAQTTFDWEIPTRDQIETLVNYANEGKLSTALNQEYITGRFLTKENGRYDIVNVGGVPDNTPVKLPAIVSKRGLMGTTSVVNAIPNEIYPHIKVYEGTLSRLKPGGAMIAVLEYDVNELSKHGYTNLWDVQFKVLVGVPHAETGVIYDPVYEETVKPYQPSNNLTGKKLYNVSTNDMHNGYKWSNTMFSNSNYKTQILLTKGDGSGVKLYSKAYSENFK.

Positions 1 to 20 (MRYKKTLMLSIMITSFNSFA) are cleaved as a signal peptide.

It localises to the cell outer membrane. In terms of biological role, involved in TCP pilus biogenesis. May be a channel protein. This is Toxin coregulated pilus biosynthesis protein F (tcpF) from Vibrio cholerae serotype O1 (strain ATCC 39541 / Classical Ogawa 395 / O395).